The sequence spans 123 residues: Ribonuclease P protein component (123 aa).

Belongs to the RnpA family. As to quaternary structure, consists of a catalytic RNA component (M1 or rnpB) and a protein subunit.

It carries out the reaction Endonucleolytic cleavage of RNA, removing 5'-extranucleotides from tRNA precursor.. RNaseP catalyzes the removal of the 5'-leader sequence from pre-tRNA to produce the mature 5'-terminus. It can also cleave other RNA substrates such as 4.5S RNA. The protein component plays an auxiliary but essential role in vivo by binding to the 5'-leader sequence and broadening the substrate specificity of the ribozyme. The polypeptide is Ribonuclease P protein component (Streptococcus pneumoniae (strain Hungary19A-6)).